Here is a 161-residue protein sequence, read N- to C-terminus: Large ribosomal subunit protein uL10 (161 aa).

This sequence belongs to the universal ribosomal protein uL10 family. Part of the ribosomal stalk of the 50S ribosomal subunit. The N-terminus interacts with L11 and the large rRNA to form the base of the stalk. The C-terminus forms an elongated spine to which L12 dimers bind in a sequential fashion forming a multimeric L10(L12)X complex.

Its function is as follows. Forms part of the ribosomal stalk, playing a central role in the interaction of the ribosome with GTP-bound translation factors. The polypeptide is Large ribosomal subunit protein uL10 (rplJ) (Mycoplasma pneumoniae (strain ATCC 29342 / M129 / Subtype 1) (Mycoplasmoides pneumoniae)).